The sequence spans 508 residues: WD repeat-containing protein DDB_G0290555 (508 aa).

WD repeat units lie at residues 32–74, 159–198, 252–292, and 295–334; these read TSEL…LIGE, NVATNLSGFAMNPSNDKFAFGGKDVNLTIWDLEKQVKTYS, FSKH…QVGS, and DSAGSVKDIAIHPTLPLLATVGLDRHLRVYNLDNRKMLHK. The tract at residues 368–508 is disordered; sequence ENKNRINNDD…KKFAGLKKRK (141 aa). Positions 399-435 are enriched in acidic residues; it reads MDSDDDIEDGDDNDVEFPMEADSDDSDFDLGNSDDDN. Over residues 436 to 446 the composition is skewed to basic and acidic residues; that stretch reads ISVKKENKGDS. A compositionally biased stretch (acidic residues) spans 447-456; it reads DDSDDDSDED. Low complexity predominate over residues 471–493; sequence NNNNNNNKGKNNKGKNNSSTKKT. The span at 497–508 shows a compositional bias: basic residues; that stretch reads LKKKFAGLKKRK.

In Dictyostelium discoideum (Social amoeba), this protein is WD repeat-containing protein DDB_G0290555.